Reading from the N-terminus, the 648-residue chain is Proton myo-inositol cotransporter (648 aa).

Residues 1 to 76 (MSRKASENVE…AARRQFQQDE (76 aa)) lie on the Cytoplasmic side of the membrane. Residues S6, S47, and S50 each carry the phosphoserine modification. A helical transmembrane segment spans residues 77-97 (TPAFVYVVAVFSALGGFLFGY). Over 98 to 125 (DTGVVSGAMLLLKRQLSLDALWQELLVS) the chain is Extracellular. A helical transmembrane segment spans residues 126–146 (STVGAAAVSALAGGALNGVFG). At 147–148 (RR) the chain is on the cytoplasmic side. The helical transmembrane segment at 149–169 (AAILLASALFTAGSAVLAAAN) threads the bilayer. Residues 170–178 (NKETLLAGR) lie on the Extracellular side of the membrane. Residues 179 to 199 (LVVGLGIGIASMTVPVYIAEV) form a helical membrane-spanning segment. The Cytoplasmic segment spans residues 200–212 (SPPNLRGRLVTIN). A helical membrane pass occupies residues 213 to 233 (TLFITGGQFFASVVDGAFSYL). Residues 234-239 (QKDGWR) lie on the Extracellular side of the membrane. Residues 240-260 (YMLGLAAVPAVIQFFGFLFLP) form a helical membrane-spanning segment. Topologically, residues 261 to 324 (ESPRWLIQKG…RMLSYPPTRR (64 aa)) are cytoplasmic. Residues 325–345 (ALIVGCGLQMFQQLSGINTIM) form a helical membrane-spanning segment. Residues 346 to 363 (YYSATILQMSGVEDDRLA) are Extracellular-facing. Residues 364-384 (IWLASVTAFTNFIFTLVGVWL) traverse the membrane as a helical segment. Residues 385-393 (VEKVGRRKL) lie on the Cytoplasmic side of the membrane. The helical transmembrane segment at 394–414 (TFGSLAGTTVALIILALGFVL) threads the bilayer. The Extracellular portion of the chain corresponds to 415-508 (SAQVSPRITF…NFCPTPYSWT (94 aa)). N-linked (GlcNAc...) asparagine glycans are attached at residues N433, N458, and N485. Residues 509 to 529 (ALLGLILYLVFFAPGMGPMPW) traverse the membrane as a helical segment. At 530-549 (TVNSEIYPLWARSTGNACSS) the chain is on the cytoplasmic side. A helical transmembrane segment spans residues 550–570 (GINWIFNVLVSLTFLHTAEYL). Over 571 to 573 (TYY) the chain is Extracellular. A helical membrane pass occupies residues 574–594 (GAFFLYAGFAAVGLLFIYGCL). Over 595-648 (PETKGKKLEEIESLFDNRLCTCGTSDSDEGRYIEYIRVKGSNYHLSDNDASDVE) the chain is Cytoplasmic. Phosphoserine occurs at positions 640 and 645.

The protein belongs to the major facilitator superfamily. Sugar transporter (TC 2.A.1.1) family. Glycosylated. In terms of tissue distribution, predominantly expressed in the brain.

It is found in the cell membrane. It carries out the reaction myo-inositol(out) + H(+)(out) = myo-inositol(in) + H(+)(in). In terms of biological role, h(+)-myo-inositol cotransporter. Can also transport related stereoisomers. This is Proton myo-inositol cotransporter from Homo sapiens (Human).